The chain runs to 1420 residues: Mediator of RNA polymerase II transcription subunit 13 (1420 aa).

Phosphoserine is present on residues Ser370, Ser375, and Ser425. Residues 416–427 (TTVSNDLENSPL) are compositionally biased toward polar residues. A disordered region spans residues 416–511 (TTVSNDLENS…TNESNKSISD (96 aa)). Positions 429–439 (TELEANGRSLE) are enriched in basic and acidic residues. Polar residues predominate over residues 440 to 453 (KVNNSVSKTGSVDT). Residues 454-484 (LHNKEGTLEQREQNENLPSDKSDSMVDKELF) show a composition bias toward basic and acidic residues. Residues 494–508 (GDSNKSNSTNESNKS) show a composition bias toward low complexity. Thr601 is modified (phosphothreonine). Ser608 carries the phosphoserine; by PKA modification. At Ser636 the chain carries Phosphoserine. The tract at residues 653-691 (LSSSEEEEDEEENGSSDEDLKSLNVRDDMKPSDNISTNT) is disordered. Positions 655–669 (SSEEEEDEEENGSSD) are enriched in acidic residues. The span at 670–683 (EDLKSLNVRDDMKP) shows a compositional bias: basic and acidic residues. Ser748 carries the phosphoserine modification.

It belongs to the Mediator complex subunit 13 family. In terms of assembly, component of the SRB8-11 complex which consists of SRB8, SSN2/SRB9, SSN3/SRB10 and SSN8/SRB11. The SRB8-11 complex associates with the Mediator complex. The SSN3/SRB10 and SSN8/SRB11 kinase-cyclin pair also associate with the RNA polymerase II holoenzyme. Post-translationally, phosphorylated. PKA-dependent phosphorylation at 'Ser-608' is enhanced by activation of the RAS signaling pathway.

It localises to the nucleus. In terms of biological role, component of the SRB8-11 complex. The SRB8-11 complex is a regulatory module of the Mediator complex which is itself involved in regulation of basal and activated RNA polymerase II-dependent transcription. The SRB8-11 complex may be involved in the transcriptional repression of a subset of genes regulated by Mediator. It may inhibit the association of the Mediator complex with RNA polymerase II to form the holoenzyme complex. The SRB8-11 complex phosphorylates the C-terminal domain (CTD) of the largest subunit of RNA polymerase II RPB1 at serines 2 and 5. The chain is Mediator of RNA polymerase II transcription subunit 13 (SSN2) from Saccharomyces cerevisiae (strain ATCC 204508 / S288c) (Baker's yeast).